The following is a 104-amino-acid chain: uncharacterized protein (104 aa).

Its subcellular location is the mitochondrion. This is an uncharacterized protein from Claviceps purpurea (Ergot fungus).